A 162-amino-acid chain; its full sequence is Peptidyl-prolyl cis-trans isomerase (162 aa).

The region spanning 5-161 is the PPIase cyclophilin-type domain; it reads FFDVQFGGDA…TTIKIVDSGV (157 aa).

It belongs to the cyclophilin-type PPIase family. PPIase A subfamily.

It catalyses the reaction [protein]-peptidylproline (omega=180) = [protein]-peptidylproline (omega=0). Binds cyclosporin A (CsA). CsA mediates some of its effects via an inhibitory action on PPIase. Its function is as follows. PPIases accelerate the folding of proteins. It catalyzes the cis-trans isomerization of proline imidic peptide bonds in oligopeptides. In Paramecium primaurelia, this protein is Peptidyl-prolyl cis-trans isomerase.